A 345-amino-acid chain; its full sequence is Anthranilate phosphoribosyltransferase (345 aa).

5-phospho-alpha-D-ribose 1-diphosphate is bound by residues glycine 84, 87 to 88 (GD), threonine 92, 94 to 97 (NIST), 112 to 120 (KHGGRSVSS), and serine 124. Position 84 (glycine 84) interacts with anthranilate. Serine 96 is a binding site for Mg(2+). Arginine 170 serves as a coordination point for anthranilate. The Mg(2+) site is built by aspartate 229 and glutamate 230.

This sequence belongs to the anthranilate phosphoribosyltransferase family. Homodimer. It depends on Mg(2+) as a cofactor.

The enzyme catalyses N-(5-phospho-beta-D-ribosyl)anthranilate + diphosphate = 5-phospho-alpha-D-ribose 1-diphosphate + anthranilate. The protein operates within amino-acid biosynthesis; L-tryptophan biosynthesis; L-tryptophan from chorismate: step 2/5. Functionally, catalyzes the transfer of the phosphoribosyl group of 5-phosphorylribose-1-pyrophosphate (PRPP) to anthranilate to yield N-(5'-phosphoribosyl)-anthranilate (PRA). The sequence is that of Anthranilate phosphoribosyltransferase from Herminiimonas arsenicoxydans.